The primary structure comprises 315 residues: Olfactory receptor 2V1 (315 aa).

Residues 1–31 (MGRWVNQSYTDGFFLLGIFSHSQTDLVLFSA) are Extracellular-facing. N6 carries N-linked (GlcNAc...) asparagine glycosylation. A helical transmembrane segment spans residues 32–52 (VMVVFTVALCGNVLLIFLIYL). Residues 53–58 (DAGLHT) are Cytoplasmic-facing. Residues 59-79 (PMYFFLSQLSLMDLMLVCNIV) traverse the membrane as a helical segment. The Extracellular portion of the chain corresponds to 80–99 (PKMAANFLSGRKSISFVGCG). A disulfide bridge links C98 with C180. A helical membrane pass occupies residues 100 to 120 (IQIGFFVSLVGSEGLLLGLMA). Topologically, residues 121-149 (YDRYVAVSHPLHYPILMNQRVCLQITGSS) are cytoplasmic. The chain crosses the membrane as a helical span at residues 150–170 (WAFGIIDGVIQMVAAMGLPYC). Residues 171–198 (GSRSVDHFFCEVQALLKLACADTSLFDT) lie on the Extracellular side of the membrane. The helical transmembrane segment at 199–219 (LLFACCVFMLLLPFSIIMASY) threads the bilayer. Residues 220–238 (ACILGAVLRIRSAQAWKKA) are Cytoplasmic-facing. The helical transmembrane segment at 239 to 259 (LATCSSHLTAVTLFYGAAMFM) threads the bilayer. Over 260–272 (YLRPRRYRAPSHD) the chain is Extracellular. A helical membrane pass occupies residues 273 to 293 (KVASIFYTVLTPMLNPLIYSL). The Cytoplasmic portion of the chain corresponds to 294 to 315 (RNGEVMGALRKGLDRCRIGSQH).

Belongs to the G-protein coupled receptor 1 family.

It localises to the cell membrane. Odorant receptor. The protein is Olfactory receptor 2V1 (OR2V1) of Homo sapiens (Human).